We begin with the raw amino-acid sequence, 230 residues long: Phosphatidylserine decarboxylase proenzyme (230 aa).

S186 acts as the Schiff-base intermediate with substrate; via pyruvic acid in catalysis. Residue S186 is modified to Pyruvic acid (Ser); by autocatalysis.

Belongs to the phosphatidylserine decarboxylase family. PSD-A subfamily. In terms of assembly, heterodimer of a large membrane-associated beta subunit and a small pyruvoyl-containing alpha subunit. It depends on pyruvate as a cofactor. Post-translationally, is synthesized initially as an inactive proenzyme. Formation of the active enzyme involves a self-maturation process in which the active site pyruvoyl group is generated from an internal serine residue via an autocatalytic post-translational modification. Two non-identical subunits are generated from the proenzyme in this reaction, and the pyruvate is formed at the N-terminus of the alpha chain, which is derived from the carboxyl end of the proenzyme. The post-translation cleavage follows an unusual pathway, termed non-hydrolytic serinolysis, in which the side chain hydroxyl group of the serine supplies its oxygen atom to form the C-terminus of the beta chain, while the remainder of the serine residue undergoes an oxidative deamination to produce ammonia and the pyruvoyl prosthetic group on the alpha chain.

It is found in the cell membrane. The enzyme catalyses a 1,2-diacyl-sn-glycero-3-phospho-L-serine + H(+) = a 1,2-diacyl-sn-glycero-3-phosphoethanolamine + CO2. It functions in the pathway phospholipid metabolism; phosphatidylethanolamine biosynthesis; phosphatidylethanolamine from CDP-diacylglycerol: step 2/2. Functionally, catalyzes the formation of phosphatidylethanolamine (PtdEtn) from phosphatidylserine (PtdSer). The chain is Phosphatidylserine decarboxylase proenzyme from Wolbachia sp. subsp. Brugia malayi (strain TRS).